Consider the following 79-residue polypeptide: Large ribosomal subunit protein uL29 (79 aa).

Belongs to the universal ribosomal protein uL29 family.

This chain is Large ribosomal subunit protein uL29, found in Tropheryma whipplei (strain TW08/27) (Whipple's bacillus).